The sequence spans 369 residues: Choline-phosphate cytidylyltransferase B (369 aa).

The interval 1-27 (MPVVTTDAESETGIPKSLSNEPPSETM) is disordered. I84, F85, H92, and K122 together coordinate CTP. Residues K122 and W151 each contribute to the phosphocholine site. CTP contacts are provided by H168, D169, Y173, Q195, R196, T197, and I200. The interval 309 to 369 (RMLQALSPKQ…SMSEGDEDEK (61 aa)) is disordered. Residues S315, S319, S322, S323, S329, S331, and S335 each carry the phosphoserine modification. Residues 319–339 (SPVSSPTRSRSPSRSPSPTFS) show a composition bias toward low complexity. T345 bears the Phosphothreonine mark. 6 positions are modified to phosphoserine: S346, S349, S350, S355, S360, and S362. The segment covering 351 to 362 (PKAASASISSMS) has biased composition (low complexity).

This sequence belongs to the cytidylyltransferase family. Homodimer. In terms of processing, phosphorylated. Extensively phosphorylated. Highly expressed in testis, placenta, brain, ovary, liver and fetal lung. As to expression, expressed in brain, liver and fetal lung.

The protein resides in the cytoplasm. Its subcellular location is the endoplasmic reticulum. It carries out the reaction phosphocholine + CTP + H(+) = CDP-choline + diphosphate. It participates in phospholipid metabolism; phosphatidylcholine biosynthesis; phosphatidylcholine from phosphocholine: step 1/2. Its function is as follows. Catalyzes the key rate-limiting step in the CDP-choline pathway for phosphatidylcholine biosynthesis. This is Choline-phosphate cytidylyltransferase B (PCYT1B) from Homo sapiens (Human).